The sequence spans 419 residues: Squalene synthase R6 (419 aa).

The chain crosses the membrane as a helical span at residues threonine 397–alanine 417.

Belongs to the phytoene/squalene synthase family. It depends on Mg(2+) as a cofactor.

It localises to the membrane. The catalysed reaction is 2 (2E,6E)-farnesyl diphosphate + NADPH + H(+) = squalene + 2 diphosphate + NADP(+). It carries out the reaction 2 (2E,6E)-farnesyl diphosphate + NADH + H(+) = squalene + 2 diphosphate + NAD(+). The protein operates within terpene metabolism; lanosterol biosynthesis; lanosterol from farnesyl diphosphate: step 1/3. Functionally, squalene synthase; part of the gene cluster that mediates the biosynthesis of squalestatin S1 (SQS1, also known as zaragozic acid A), a heavily oxidized fungal polyketide that offers potent cholesterol lowering activity by targeting squalene synthase (SS). Catalyzes the condensation of 2 two farnesyl pyrophosphate moieties to form squalene. The presence of a gene encoding a squalene synthase supports the identification of the cluster as being responsible for SQS1 production and suggests a likely mechanism for self-resistance. The protein is Squalene synthase R6 of Phoma sp. (strain ATCC 20986 / MF5453).